The primary structure comprises 43 residues: Photosystem I reaction center subunit IX (43 aa).

The chain crosses the membrane as a helical span at residues 7 to 27 (YLSTAPVLSTIWFGSLAGLLI).

It belongs to the PsaJ family.

It is found in the plastid. The protein localises to the chloroplast thylakoid membrane. Its function is as follows. May help in the organization of the PsaE and PsaF subunits. The chain is Photosystem I reaction center subunit IX from Vitis vinifera (Grape).